A 396-amino-acid polypeptide reads, in one-letter code: 3-amino-4-hydroxybenzoate 2-monooxygenase PtmB3 (396 aa).

FAD is bound by residues A19, 38–39 (EQ), and R112. Y217 (proton acceptor) is an active-site residue. Position 295 (D295) interacts with FAD. The interval 352 to 371 (RERGHEFHLPDGPQQRLRDR) is disordered.

It belongs to the 6-hydroxynicotinate 3-monooxygenase family. FAD serves as cofactor.

It catalyses the reaction 3-amino-4-hydroxybenzoate + NADPH + O2 + H(+) = 3-amino-2,4-dihydroxybenzoate + NADP(+) + H2O. The protein operates within antibiotic biosynthesis. Its function is as follows. Part of a gene cluster involved in the biosynthesis of thioplatensimycin (thioPTM) and platensimycin (PTM), potent and selective inhibitors of bacterial and mammalian fatty acid synthases. Catalyzes the hydroxylation of 3-amino-4-hydroxybenzoate (3,4-AHBA) to 3-amino-2,4-dihydroxybenzoate (3,2,4-ADHBA). The polypeptide is 3-amino-4-hydroxybenzoate 2-monooxygenase PtmB3 (Streptomyces platensis).